The chain runs to 864 residues: DNA mismatch repair protein MutS (864 aa).

607–614 (GPNMGGKS) serves as a coordination point for ATP.

The protein belongs to the DNA mismatch repair MutS family.

Functionally, this protein is involved in the repair of mismatches in DNA. It is possible that it carries out the mismatch recognition step. This protein has a weak ATPase activity. This Neisseria meningitidis serogroup C / serotype 2a (strain ATCC 700532 / DSM 15464 / FAM18) protein is DNA mismatch repair protein MutS.